Consider the following 246-residue polypeptide: Osmotin-like protein OSML13 (246 aa).

An N-terminal signal peptide occupies residues 1–21; it reads MAYLRSSFVFFLLAFVTYTYA. Disulfide bonds link Cys30-Cys225, Cys72-Cys82, Cys87-Cys93, Cys141-Cys213, Cys146-Cys196, Cys154-Cys164, Cys168-Cys177, and Cys178-Cys183.

It belongs to the thaumatin family.

The protein is Osmotin-like protein OSML13 of Solanum commersonii (Commerson's wild potato).